A 394-amino-acid polypeptide reads, in one-letter code: Protein-glutamate methylesterase/protein-glutamine glutaminase 2 (394 aa).

In terms of domain architecture, Response regulatory spans 4 to 121 (KVLVVDDSSF…ARNRDEAISL (118 aa)). D55 bears the 4-aspartylphosphate mark. Positions 202–394 (SGKKYQLMAI…AERILVEVGR (193 aa)) constitute a CheB-type methylesterase domain. Catalysis depends on residues S214, H241, and D337.

It belongs to the CheB family. In terms of processing, phosphorylated by CheA. Phosphorylation of the N-terminal regulatory domain activates the methylesterase activity.

The protein localises to the cytoplasm. The enzyme catalyses [protein]-L-glutamate 5-O-methyl ester + H2O = L-glutamyl-[protein] + methanol + H(+). The catalysed reaction is L-glutaminyl-[protein] + H2O = L-glutamyl-[protein] + NH4(+). Involved in chemotaxis. Part of a chemotaxis signal transduction system that modulates chemotaxis in response to various stimuli. Catalyzes the demethylation of specific methylglutamate residues introduced into the chemoreceptors (methyl-accepting chemotaxis proteins or MCP) by CheR. Also mediates the irreversible deamidation of specific glutamine residues to glutamic acid. In Photobacterium profundum (strain SS9), this protein is Protein-glutamate methylesterase/protein-glutamine glutaminase 2.